A 438-amino-acid chain; its full sequence is ATP-dependent protease ATPase subunit HslU (438 aa).

ATP-binding positions include Ile-18, 60–65 (GVGKTE), Asp-251, Glu-316, and Arg-388.

It belongs to the ClpX chaperone family. HslU subfamily. A double ring-shaped homohexamer of HslV is capped on each side by a ring-shaped HslU homohexamer. The assembly of the HslU/HslV complex is dependent on binding of ATP.

The protein resides in the cytoplasm. Functionally, ATPase subunit of a proteasome-like degradation complex; this subunit has chaperone activity. The binding of ATP and its subsequent hydrolysis by HslU are essential for unfolding of protein substrates subsequently hydrolyzed by HslV. HslU recognizes the N-terminal part of its protein substrates and unfolds these before they are guided to HslV for hydrolysis. In Jannaschia sp. (strain CCS1), this protein is ATP-dependent protease ATPase subunit HslU.